A 22-amino-acid polypeptide reads, in one-letter code: Chlorate reductase subunit gamma (22 aa).

Residues 1 to 22 (EXSEQNPNILEIKPGDTVKVXT) are disordered.

In terms of assembly, heterotrimer of alpha, beta and gamma subunits. The cofactor is heme b.

Its subcellular location is the cytoplasm. Functionally, may transfer electrons to the iron-sulfur centers of the beta subunit of chlorate reductase. The polypeptide is Chlorate reductase subunit gamma (Stutzerimonas chloritidismutans (Pseudomonas chloritidismutans)).